A 274-amino-acid polypeptide reads, in one-letter code: Putative hydro-lyase SAV_6940 (274 aa).

The protein belongs to the D-glutamate cyclase family.

This chain is Putative hydro-lyase SAV_6940, found in Streptomyces avermitilis (strain ATCC 31267 / DSM 46492 / JCM 5070 / NBRC 14893 / NCIMB 12804 / NRRL 8165 / MA-4680).